We begin with the raw amino-acid sequence, 419 residues long: O-methyltransferase desB (419 aa).

S-adenosyl-L-methionine contacts are provided by residues 255–256 (GG), aspartate 280, 306–307 (DF), and arginine 323. Histidine 326 functions as the Proton acceptor in the catalytic mechanism.

Belongs to the class I-like SAM-binding methyltransferase superfamily. Cation-independent O-methyltransferase family. The cofactor is S-adenosyl-L-methionine.

Its pathway is secondary metabolite biosynthesis. Non-reducing polyketide synthase; part of the gene cluster that mediates the biosynthesis of the bicoumarin desertorin. The non-reducing polyketide synthase desS first catalyzes the formation of the pentaketidic 4,7-dihydroxy-5-methylcoumarin from acetyl coenzyme A and 4 malonyl coenzyme A molecules. Further O-methylation by desB leads to the formation of 7-demethylsiderin. Then, an oxidative phenol coupling catalyzed by the cytochrome P450 monooxygenase desC forms the 6,8'-dimer M-desertorin A via dimerization the monomeric precursor, 7-demethylsiderin. M-desertorin A is further converted to M-desertorin C. The chain is O-methyltransferase desB from Aspergillus desertorum (Emericella desertorum).